Consider the following 483-residue polypeptide: Ankyrin repeat domain-containing protein M-T5 (483 aa).

6 ANK repeats span residues 32–63, 67–101, 105–137, 177–210, 250–279, and 283–312; these read SRDT…DVNG, SRTS…DVNA, DGRY…SVYV, YGFN…DSSR, LDFT…DPNV, and LGNS…TPDA. Residues 390–478 are PRANC/F-box-like; the sequence is VSVFDTAFGL…LTDDEIHDLF (89 aa).

As to quaternary structure, interacts (via PRANC/F-box-like domain) with the SKP1 component of the host SCF ubiquitin ligase complex. Interacts (via N-terminus) with host AKT1.

Substrate-specific adapter of SKP1-containing E3 ubiquitin-protein ligases which mediate the ubiquitination and subsequent proteasomal degradation of host target proteins including CDKN1B. Disappearance of host CDKN1B correlates with cell cycle progression through the G0/G1 checkpoint. Therefore, viruses in infected cells are protected from diverse innate host antiviral responses normally triggered by G0/G1 cell cycle arrest. The chain is Ankyrin repeat domain-containing protein M-T5 (m005R) from Myxoma virus (strain Lausanne) (MYXV).